Reading from the N-terminus, the 127-residue chain is Holo-[acyl-carrier-protein] synthase (127 aa).

Residues Asp-9 and Glu-58 each contribute to the Mg(2+) site.

The protein belongs to the P-Pant transferase superfamily. AcpS family. Mg(2+) is required as a cofactor.

The protein localises to the cytoplasm. The enzyme catalyses apo-[ACP] + CoA = holo-[ACP] + adenosine 3',5'-bisphosphate + H(+). Its function is as follows. Transfers the 4'-phosphopantetheine moiety from coenzyme A to a Ser of acyl-carrier-protein. The polypeptide is Holo-[acyl-carrier-protein] synthase (Shewanella sp. (strain W3-18-1)).